A 242-amino-acid chain; its full sequence is MDGVKEWFNSIPPVSRYMFAIFLGIPVLAAMHLISFNYLYLDFTFTFKHFHLWRLITAPCIISSLGPMFLFNLIFFYQYTTRLESLNYAGKSDDYLFCIIFISICNIIFGLIFEYYFLGTMTIMSLIYIYSRMNPTGTSNFYGFFSFKTIYLPWVFLVAHFLQTGHPPYSDFLAIVSGHIFFYLTDIYPRANGVPALIKTPKFITNIFNKGDRNPNNVRRDPRTGRPIQEGGYNWGQGHALG.

The Cytoplasmic portion of the chain corresponds to 1-18; that stretch reads MDGVKEWFNSIPPVSRYM. The chain crosses the membrane as a helical span at residues 19–39; it reads FAIFLGIPVLAAMHLISFNYL. Residues 40 to 98 are Lumenal-facing; sequence YLDFTFTFKHFHLWRLITAPCIISSLGPMFLFNLIFFYQYTTRLESLNYAGKSDDYLFC. Residues 99 to 119 form a helical membrane-spanning segment; that stretch reads IIFISICNIIFGLIFEYYFLG. The Cytoplasmic portion of the chain corresponds to 120–140; the sequence is TMTIMSLIYIYSRMNPTGTSN. A helical transmembrane segment spans residues 141-161; sequence FYGFFSFKTIYLPWVFLVAHF. The Lumenal segment spans residues 162-167; that stretch reads LQTGHP. A helical membrane pass occupies residues 168–188; sequence PYSDFLAIVSGHIFFYLTDIY. The Cytoplasmic portion of the chain corresponds to 189 to 242; the sequence is PRANGVPALIKTPKFITNIFNKGDRNPNNVRRDPRTGRPIQEGGYNWGQGHALG. The span at 214–224 shows a compositional bias: basic and acidic residues; it reads NPNNVRRDPRT. The tract at residues 214 to 242 is disordered; the sequence is NPNNVRRDPRTGRPIQEGGYNWGQGHALG. Residues 233-242 are compositionally biased toward gly residues; sequence YNWGQGHALG.

Belongs to the derlin family.

Its subcellular location is the endoplasmic reticulum membrane. May be involved in the degradation process of specific misfolded endoplasmic reticulum (ER) luminal proteins. May also involved in endoplasmic reticulum stress-induced pre-emptive quality control, a mechanism that selectively attenuates the translocation of newly synthesized proteins into the endoplasmic reticulum and reroutes them to the cytosol for proteasomal degradation. The sequence is that of Probable derlin-1 homolog from Dictyostelium discoideum (Social amoeba).